A 143-amino-acid polypeptide reads, in one-letter code: Ribosome-binding factor A (143 aa).

A compositionally biased stretch (basic and acidic residues) spans 116–128 (SDDEAKQKQHGDQ). The tract at residues 116-143 (SDDEAKQKQHGDQQDVSQSSDDKSEGED) is disordered.

Belongs to the RbfA family. In terms of assembly, monomer. Binds 30S ribosomal subunits, but not 50S ribosomal subunits or 70S ribosomes.

The protein localises to the cytoplasm. Its function is as follows. One of several proteins that assist in the late maturation steps of the functional core of the 30S ribosomal subunit. Associates with free 30S ribosomal subunits (but not with 30S subunits that are part of 70S ribosomes or polysomes). Required for efficient processing of 16S rRNA. May interact with the 5'-terminal helix region of 16S rRNA. In Shewanella sediminis (strain HAW-EB3), this protein is Ribosome-binding factor A.